An 883-amino-acid chain; its full sequence is DNA double-strand break repair Rad50 ATPase (883 aa).

Residues Arg-12, 32–38 (NGSGKSS), and Gln-134 contribute to the ATP site. Residues 218 to 420 (ELRGELGGLE…EIGSRRGELK (203 aa)) are a coiled coil. Positions 395-492 (IQKARERKEE…ELVEVEKTLK (98 aa)) constitute a Zinc-hook domain. The Zn(2+) site is built by Cys-440 and Cys-443. Coiled coils occupy residues 452–585 (RKEL…KKLG) and 620–741 (EDLL…LLKE). ATP is bound at residue 790-795 (FLSGGE).

Belongs to the SMC family. RAD50 subfamily. Homodimer. Forms a heterotetramer composed of two Mre11 subunits and two Rad50 subunits. The cofactor is Zn(2+).

In terms of biological role, part of the Rad50/Mre11 complex, which is involved in the early steps of DNA double-strand break (DSB) repair. The complex may facilitate opening of the processed DNA ends to aid in the recruitment of HerA and NurA. Rad50 controls the balance between DNA end bridging and DNA resection via ATP-dependent structural rearrangements of the Rad50/Mre11 complex. The protein is DNA double-strand break repair Rad50 ATPase of Thermococcus kodakarensis (strain ATCC BAA-918 / JCM 12380 / KOD1) (Pyrococcus kodakaraensis (strain KOD1)).